An 873-amino-acid chain; its full sequence is Cyanophycin synthetase (873 aa).

One can recognise an ATP-grasp domain in the interval 224-480; it reads KTILQDAGIP…VAAPVLDMLF (257 aa). 495–501 serves as a coordination point for ATP; that stretch reads GTNGKTT.

This sequence in the C-terminal section; belongs to the MurCDEF family. As to quaternary structure, homodimer.

It carries out the reaction [L-4-(L-arginin-2-N-yl)aspartate](n) + L-aspartate + ATP = [L-4-(L-arginin-2-N-yl)aspartate](n)-L-aspartate + ADP + phosphate + H(+). The enzyme catalyses [L-4-(L-arginin-2-N-yl)aspartate](n)-L-aspartate + L-arginine + ATP = [L-4-(L-arginin-2-N-yl)aspartate](n+1) + ADP + phosphate + H(+). In terms of biological role, catalyzes the ATP-dependent polymerization of arginine and aspartate to multi-L-arginyl-poly-L-aspartic acid (cyanophycin; a water-insoluble reserve polymer). The polypeptide is Cyanophycin synthetase (cphA) (Synechocystis sp. (strain ATCC 27184 / PCC 6803 / Kazusa)).